The chain runs to 348 residues: Lipooligosaccharide heptosyltransferase 2 (348 aa).

It belongs to the glycosyltransferase 9 family.

The catalysed reaction is an L-alpha-D-Hep-(1-&gt;5)-[alpha-Kdo-(2-&gt;4)]-alpha-Kdo-(2-&gt;6)-lipid A + ADP-L-glycero-beta-D-manno-heptose = an L-alpha-D-Hep-(1-&gt;3)-L-alpha-D-Hep-(1-&gt;5)-[alpha-Kdo-(2-&gt;4)]-alpha-Kdo-(2-&gt;6)-lipid A + ADP + H(+). It participates in bacterial outer membrane biogenesis; LOS core biosynthesis. Its function is as follows. Glycosyltransferase involved in the biosynthesis of the core oligosaccharide region of lipooligosaccharide (LOS). Catalyzes the addition of a heptose unit to the heptosyl-Kdo2-lipid A module. The chain is Lipooligosaccharide heptosyltransferase 2 from Haemophilus ducreyi (strain 35000HP / ATCC 700724).